Consider the following 427-residue polypeptide: BSD domain-containing protein 1 (427 aa).

Phosphoserine occurs at positions 92 and 166. The BSD domain maps to W146 to E198. Residues K208 to D397 are disordered. Over residues P219–E229 the composition is skewed to acidic residues. The span at K236 to K245 shows a compositional bias: basic and acidic residues. Over residues P268–S279 the composition is skewed to low complexity. Pro residues predominate over residues G324 to P333. Positions P347–V364 are enriched in basic and acidic residues. Phosphothreonine is present on T353. Residues N368 to D387 show a composition bias toward polar residues. 2 positions are modified to phosphoserine: S384 and S385. The span at I388–D397 shows a compositional bias: acidic residues. S415 carries the post-translational modification Phosphoserine.

The chain is BSD domain-containing protein 1 (Bsdc1) from Mus musculus (Mouse).